Here is a 150-residue protein sequence, read N- to C-terminus: Protein-export protein SecB (150 aa).

This sequence belongs to the SecB family. Homotetramer, a dimer of dimers. One homotetramer interacts with 1 SecA dimer.

It localises to the cytoplasm. Functionally, one of the proteins required for the normal export of preproteins out of the cell cytoplasm. It is a molecular chaperone that binds to a subset of precursor proteins, maintaining them in a translocation-competent state. It also specifically binds to its receptor SecA. This is Protein-export protein SecB from Chromobacterium violaceum (strain ATCC 12472 / DSM 30191 / JCM 1249 / CCUG 213 / NBRC 12614 / NCIMB 9131 / NCTC 9757 / MK).